Reading from the N-terminus, the 128-residue chain is Iron-sulfur cluster insertion protein ErpA (128 aa).

Residues Cys56, Cys120, and Cys122 each contribute to the iron-sulfur cluster site.

The protein belongs to the HesB/IscA family. As to quaternary structure, homodimer. Iron-sulfur cluster is required as a cofactor.

In terms of biological role, required for insertion of 4Fe-4S clusters for at least IspG. This Xylella fastidiosa (strain M23) protein is Iron-sulfur cluster insertion protein ErpA.